The primary structure comprises 554 residues: Nonribosomal peptide synthetase ALT12 (554 aa).

Positions 1-76 (MASLEHMKRI…TLWEAMNDTQ (76 aa)) constitute a Carrier domain. Ser35 is subject to O-(pantetheine 4'-phosphoryl)serine. The interval 124–434 (VQDNVLCVAP…QRIQNEITST (311 aa)) is condensation.

The protein belongs to the NRP synthetase family.

Its pathway is mycotoxin biosynthesis. Functionally, nonribosomal peptide synthetase; part of the gene cluster that mediates the biosynthesis of the host-selective toxins (HSTs) AAL-toxins, sphinganine-analog mycotoxins responsible for Alternaria stem canker on tomato by the tomato pathotype. The biosynthesis starts with the polyketide synthase ALT1-catalyzed C-16 carbon chain assembly from one starter acetyl-CoA unit with malonyl-CoA extender units. ALT1 also selectively transfers methyl groups at the first and the third cycle of chain elongation for AAL toxin. The C-16 polyketide chain is released from the enzyme by a nucleophilic attack of a carbanion, which is derived from R-carbon of glycin by decarboxylation, on the carbonyl carbon of polyketide acyl chain. This step is probably catalyzed by a pyridoxal 5'-phosphate-dependent aminoacyl transferase ALT4. The respective functions of the other enzymes encoded by the cluster have still to be elucidated. The sphingosine N-acyltransferase-like protein ALT7 seems not to act as a resistance/self-tolerance factor against the toxin in the toxin biosynthetic gene cluster, contrary to what is expected. This is Nonribosomal peptide synthetase ALT12 from Alternaria alternata (Alternaria rot fungus).